The sequence spans 102 residues: ATP-dependent Clp protease adapter protein ClpS (102 aa).

The protein belongs to the ClpS family. Binds to the N-terminal domain of the chaperone ClpA.

Involved in the modulation of the specificity of the ClpAP-mediated ATP-dependent protein degradation. The sequence is that of ATP-dependent Clp protease adapter protein ClpS from Shewanella pealeana (strain ATCC 700345 / ANG-SQ1).